A 1404-amino-acid chain; its full sequence is DNA-directed RNA polymerase subunit beta' (1404 aa).

Zn(2+) contacts are provided by C72, C74, C87, and C90. The Mg(2+) site is built by D463, D465, and D467. Zn(2+) is bound by residues C811, C885, C892, and C895.

It belongs to the RNA polymerase beta' chain family. The RNAP catalytic core consists of 2 alpha, 1 beta, 1 beta' and 1 omega subunit. When a sigma factor is associated with the core the holoenzyme is formed, which can initiate transcription. The cofactor is Mg(2+). Zn(2+) is required as a cofactor.

It carries out the reaction RNA(n) + a ribonucleoside 5'-triphosphate = RNA(n+1) + diphosphate. Its function is as follows. DNA-dependent RNA polymerase catalyzes the transcription of DNA into RNA using the four ribonucleoside triphosphates as substrates. The sequence is that of DNA-directed RNA polymerase subunit beta' from Jannaschia sp. (strain CCS1).